Reading from the N-terminus, the 284-residue chain is 4-hydroxybenzoate octaprenyltransferase (284 aa).

Transmembrane regions (helical) follow at residues 19–39 (IGSL…AQGL), 42–62 (LRVL…GCVI), 93–113 (LLLF…MNTL), 114–134 (TIQL…MKRF), 136–156 (HLPQ…AWAA), 158–178 (ANTL…WTIA), 210–230 (IIGL…QGLA), 233–253 (TSYY…QHLI), and 264–284 (AFLN…LSVW).

It belongs to the UbiA prenyltransferase family. Mg(2+) serves as cofactor.

It is found in the cell inner membrane. It carries out the reaction all-trans-octaprenyl diphosphate + 4-hydroxybenzoate = 4-hydroxy-3-(all-trans-octaprenyl)benzoate + diphosphate. It participates in cofactor biosynthesis; ubiquinone biosynthesis. Functionally, catalyzes the prenylation of para-hydroxybenzoate (PHB) with an all-trans polyprenyl group. Mediates the second step in the final reaction sequence of ubiquinone-8 (UQ-8) biosynthesis, which is the condensation of the polyisoprenoid side chain with PHB, generating the first membrane-bound Q intermediate 3-octaprenyl-4-hydroxybenzoate. The chain is 4-hydroxybenzoate octaprenyltransferase from Vibrio cholerae serotype O1 (strain ATCC 39541 / Classical Ogawa 395 / O395).